The primary structure comprises 70 residues: DNA-directed RNA polymerase subunit omega (70 aa).

Belongs to the RNA polymerase subunit omega family. The RNAP catalytic core consists of 2 alpha, 1 beta, 1 beta' and 1 omega subunit. When a sigma factor is associated with the core the holoenzyme is formed, which can initiate transcription.

It carries out the reaction RNA(n) + a ribonucleoside 5'-triphosphate = RNA(n+1) + diphosphate. Its function is as follows. Promotes RNA polymerase assembly. Latches the N- and C-terminal regions of the beta' subunit thereby facilitating its interaction with the beta and alpha subunits. This Shouchella clausii (strain KSM-K16) (Alkalihalobacillus clausii) protein is DNA-directed RNA polymerase subunit omega.